Consider the following 60-residue polypeptide: Metallothionein B (60 aa).

Residues 1–28 form a beta region; it reads MDPCDCSKSGTCNCGGSCTCTNCSCTSC. Residues cysteine 4, cysteine 6, cysteine 12, cysteine 14, cysteine 18, cysteine 20, cysteine 23, cysteine 25, cysteine 28, cysteine 32, cysteine 33, cysteine 35, cysteine 36, cysteine 40, cysteine 43, cysteine 47, cysteine 49, cysteine 54, cysteine 58, and cysteine 59 each coordinate a divalent metal cation. An alpha region spans residues 29 to 60; it reads KKSCCPCCPSGCTKCASGCVCKGKTCDTSCCQ.

This sequence belongs to the metallothionein superfamily. Type 1 family.

Metallothioneins have a high content of cysteine residues that bind various heavy metals. In Chionodraco hamatus (Antarctic teleost icefish), this protein is Metallothionein B (mtb).